Here is a 505-residue protein sequence, read N- to C-terminus: Histidine--tRNA ligase (505 aa).

It belongs to the class-II aminoacyl-tRNA synthetase family. In terms of assembly, homodimer.

The protein localises to the cytoplasm. It carries out the reaction tRNA(His) + L-histidine + ATP = L-histidyl-tRNA(His) + AMP + diphosphate + H(+). The polypeptide is Histidine--tRNA ligase (Jannaschia sp. (strain CCS1)).